We begin with the raw amino-acid sequence, 476 residues long: Regulator of nonsense transcripts 3A (476 aa).

Residues 1–63 (MRSEKEGAGG…GGAGKPREEK (63 aa)) form a disordered region. The segment covering 21 to 38 (SGREKLSALEVQFHRDSQ) has biased composition (basic and acidic residues). A required for interaction with UPF2 region spans residues 66–140 (ALSKVVIRRL…FDGYIFLDSK (75 aa)). Composition is skewed to basic and acidic residues over residues 250–304 (REEE…RGEE), 340–401 (GSDK…KKGS), and 410–437 (AMER…KDRP). The disordered stretch occupies residues 250 to 476 (REEEKRRRRE…TGPEKREEAE (227 aa)). Serine 341 carries the post-translational modification Phosphoserine. The tract at residues 421–434 (DDSPAPRKERLANK) is required for association with EIF4A3 and ECJ core components CASC3, MAGOH and RBM8A.

It belongs to the RENT3 family. Found in a post-splicing messenger ribonucleoprotein (mRNP) complex. Associates with the exon junction complex (EJC). Interacts with UPF2 and RBM8A. Interacts with DHX34; the interaction is RNA-independent. Isoform 1 is strongly expressed in testis, uterus, muscle, fetal brain and spinal cord. Isoform 2 is strongly expressed in fetal brain and spinal cord.

The protein resides in the nucleus. The protein localises to the cytoplasm. Involved in nonsense-mediated decay (NMD) of mRNAs containing premature stop codons by associating with the nuclear exon junction complex (EJC) and serving as link between the EJC core and NMD machinery. Recruits UPF2 at the cytoplasmic side of the nuclear envelope and the subsequent formation of an UPF1-UPF2-UPF3 surveillance complex (including UPF1 bound to release factors at the stalled ribosome) is believed to activate NMD. However, UPF3A is shown to be only marginally active in NMD as compared to UPF3B. Binds spliced mRNA upstream of exon-exon junctions. In vitro, weakly stimulates translation. The chain is Regulator of nonsense transcripts 3A (UPF3A) from Homo sapiens (Human).